The primary structure comprises 329 residues: Tryptophan--tRNA ligase (329 aa).

Residues 9–11 and 17–18 contribute to the ATP site; these read QPS and GN. The 'HIGH' region signature appears at 10–18; that stretch reads PSGIPTIGN. Residue D133 participates in L-tryptophan binding. ATP contacts are provided by residues 145-147, V184, and 193-197; these read GDD and KMSKS. Residues 193 to 197 carry the 'KMSKS' region motif; that stretch reads KMSKS.

The protein belongs to the class-I aminoacyl-tRNA synthetase family. In terms of assembly, homodimer.

Its subcellular location is the cytoplasm. It catalyses the reaction tRNA(Trp) + L-tryptophan + ATP = L-tryptophyl-tRNA(Trp) + AMP + diphosphate + H(+). Its function is as follows. Catalyzes the attachment of tryptophan to tRNA(Trp). This chain is Tryptophan--tRNA ligase, found in Staphylococcus aureus (strain MRSA252).